Consider the following 445-residue polypeptide: Rab GDP dissociation inhibitor beta (445 aa).

An N-acetylmethionine modification is found at methionine 1. Residue lysine 57 is modified to N6-succinyllysine. N6-acetyllysine is present on lysine 112. Position 130 is a phosphoserine (serine 130). Lysine 269 is modified (N6-acetyllysine). Position 382 is a phosphoserine (serine 382).

It belongs to the Rab GDI family. Interacts with RHOH. Interacts with the GDP-bound inactive forms of RAB3A, RAB3B, RAB3C, RAB5A, RAB5B, RAB5C, RAB8A, RAB8B, RAB10, RAB12, RAB35, and RAB43; binds RAB3D to a lesser extent. Interacts with DZIP1; this interaction negatively regulates the interaction of GDI2 with GDP-bound RAB8A.

The protein resides in the cytoplasm. Its subcellular location is the membrane. The protein localises to the golgi apparatus. It localises to the trans-Golgi network. Its function is as follows. GDP-dissociation inhibitor preventing the GDP to GTP exchange of most Rab proteins. By keeping these small GTPases in their inactive GDP-bound form regulates intracellular membrane trafficking. Negatively regulates protein transport to the cilium and ciliogenesis through the inhibition of RAB8A. This chain is Rab GDP dissociation inhibitor beta (GDI2), found in Pongo abelii (Sumatran orangutan).